A 209-amino-acid polypeptide reads, in one-letter code: Transcription factor atf31 (209 aa).

Polar residues predominate over residues 90-103 (SKSPSIISEASHNS). A disordered region spans residues 90 to 133 (SKSPSIISEASHNSPSRELDDSGDENTSKLTGTKQSMLKARNRQ). The bZIP domain maps to 121–184 (GTKQSMLKAR…IKLRTLVFAH (64 aa)). The tract at residues 123–161 (KQSMLKARNRQAAQKCRIKKKKYLQTLQDQVNYYTSENK) is basic motif. The segment at 163 to 177 (LLQSANDLREEIIKL) is leucine-zipper.

It belongs to the bZIP family.

The protein localises to the nucleus. This chain is Transcription factor atf31 (atf31), found in Schizosaccharomyces pombe (strain 972 / ATCC 24843) (Fission yeast).